A 60-amino-acid chain; its full sequence is UPF0391 membrane protein CCNA_00709 (60 aa).

The next 2 helical transmembrane spans lie at 4 to 24 (WAIILAIVALIAGALGFSGLA) and 33 to 53 (ILFFLFLVGFVLVLLLGGTVF).

Belongs to the UPF0391 family.

The protein resides in the cell membrane. The chain is UPF0391 membrane protein CCNA_00709 from Caulobacter vibrioides (strain NA1000 / CB15N) (Caulobacter crescentus).